An 82-amino-acid polypeptide reads, in one-letter code: Sulfur carrier protein TusA (82 aa).

The active-site Cysteine persulfide intermediate is the C19.

The protein belongs to the sulfur carrier protein TusA family.

The protein localises to the cytoplasm. Its function is as follows. Sulfur carrier protein which probably makes part of a sulfur-relay system. The sequence is that of Sulfur carrier protein TusA from Vibrio parahaemolyticus serotype O3:K6 (strain RIMD 2210633).